The sequence spans 397 residues: Fractalkine (397 aa).

The first 24 residues, 1-24 (MAPISLSWLLRLATFCHLTVLLAG), serve as a signal peptide directing secretion. A chemokine and involved in interaction with ITGAV:ITGB3 and ITGA4:ITGB1 region spans residues 25–100 (QHHGVTKCNI…RQAAALTRNG (76 aa)). The Extracellular portion of the chain corresponds to 25–341 (QHHGVTKCNI…PDAQAATRRQ (317 aa)). Intrachain disulfides connect Cys-32–Cys-58 and Cys-36–Cys-74. N-linked (GlcNAc...) asparagine glycosylation occurs at Asn-33. Residues 101–341 (GTFEKQIGEV…PDAQAATRRQ (241 aa)) form a mucin-like stalk region. Disordered stretches follow at residues 128–265 (EPEA…REEM) and 289–309 (VPVS…SWTP). Over residues 133–147 (GESSSLEPTPSSQEA) the composition is skewed to polar residues. Thr-183 carries an O-linked (GalNAc...) threonine glycan. Over residues 193-202 (TAATWQSSAP) the composition is skewed to polar residues. A compositionally biased stretch (low complexity) spans 219-243 (PSTQDPSTQASTASSPAPEENAPSE). A glycan (O-linked (GalNAc...) serine) is linked at Ser-253. An O-linked (GalNAc...) threonine glycan is attached at Thr-329. Residues 342–362 (AVGLLAFLGLLFCLGVAMFTY) form a helical membrane-spanning segment. The Cytoplasmic portion of the chain corresponds to 363–397 (QSLQGCPRKMAGEMAEGLRYIPRSCGSNSYVLVPV).

This sequence belongs to the intercrine delta family. Monomer. Forms a ternary complex with CX3CR1 and ITGAV:ITGB3 or ITGA4:ITGB1. In terms of assembly, (Microbial infection) Interacts with pox virus crmD; this inhibits cell migration mediated by CX3CL1. As to quaternary structure, (Microbial infection) Interacts (via N-terminus) with human cytomegalovirus (HHV-5) US28. (Microbial infection) Interacts with P.falciparum (strain 3D7) CBP1 and CBP2 (via their extracellular domains); the interaction mediates the adhesion of infected erythrocytes with endothelial cells. Post-translationally, a soluble short 95 kDa form may be released by proteolytic cleavage from the long membrane-anchored form. In terms of processing, O-glycosylated with core 1 or possibly core 8 glycans. Expressed in the seminal plasma, endometrial fluid and follicular fluid (at protein level). Small intestine, colon, testis, prostate, heart, brain, lung, skeletal muscle, kidney and pancreas. Most abundant in the brain and heart.

It is found in the cell membrane. The protein resides in the secreted. Functionally, chemokine that acts as a ligand for both CX3CR1 and integrins ITGAV:ITGB3 and ITGA4:ITGB1. The CX3CR1-CX3CL1 signaling exerts distinct functions in different tissue compartments, such as immune response, inflammation, cell adhesion and chemotaxis. Regulates leukocyte adhesion and migration processes at the endothelium. Can activate integrins in both a CX3CR1-dependent and CX3CR1-independent manner. In the presence of CX3CR1, activates integrins by binding to the classical ligand-binding site (site 1) in integrins. In the absence of CX3CR1, binds to a second site (site 2) in integrins which is distinct from site 1 and enhances the binding of other integrin ligands to site 1. The soluble form is chemotactic for T-cells and monocytes, but not for neutrophils. Its function is as follows. The membrane-bound form promotes adhesion of those leukocytes to endothelial cells. In terms of biological role, (Microbial infection) Mediates the cytoadherence of erythrocytes infected with parasite P.falciparum (strain 3D7) with endothelial cells by interacting with P.falciparum CBP1 and CBP2 expressed at the surface of erythrocytes. The adhesion prevents the elimination of infected erythrocytes by the spleen. The sequence is that of Fractalkine from Homo sapiens (Human).